The following is a 206-amino-acid chain: Na(+)-translocating NADH-quinone reductase subunit E (206 aa).

The next 6 membrane-spanning stretches (helical) occupy residues 12–32 (AVFV…FIAI), 36–56 (IQTA…TVPV), 85–105 (FLGL…LEMT), 118–138 (GIFL…LFMV), 148–168 (VVYG…LAGI), and 184–204 (LGIT…FSGV).

It belongs to the NqrDE/RnfAE family. Composed of six subunits; NqrA, NqrB, NqrC, NqrD, NqrE and NqrF.

Its subcellular location is the cell inner membrane. The catalysed reaction is a ubiquinone + n Na(+)(in) + NADH + H(+) = a ubiquinol + n Na(+)(out) + NAD(+). Functionally, NQR complex catalyzes the reduction of ubiquinone-1 to ubiquinol by two successive reactions, coupled with the transport of Na(+) ions from the cytoplasm to the periplasm. NqrA to NqrE are probably involved in the second step, the conversion of ubisemiquinone to ubiquinol. This Alcanivorax borkumensis (strain ATCC 700651 / DSM 11573 / NCIMB 13689 / SK2) protein is Na(+)-translocating NADH-quinone reductase subunit E.